A 365-amino-acid chain; its full sequence is tRNA/tmRNA (uracil-C(5))-methyltransferase (365 aa).

5 residues coordinate S-adenosyl-L-methionine: Q189, Y217, N222, E238, and D298. Residue C323 is the Nucleophile of the active site. E357 acts as the Proton acceptor in catalysis.

This sequence belongs to the class I-like SAM-binding methyltransferase superfamily. RNA M5U methyltransferase family. TrmA subfamily.

The catalysed reaction is uridine(54) in tRNA + S-adenosyl-L-methionine = 5-methyluridine(54) in tRNA + S-adenosyl-L-homocysteine + H(+). The enzyme catalyses uridine(341) in tmRNA + S-adenosyl-L-methionine = 5-methyluridine(341) in tmRNA + S-adenosyl-L-homocysteine + H(+). In terms of biological role, dual-specificity methyltransferase that catalyzes the formation of 5-methyluridine at position 54 (m5U54) in all tRNAs, and that of position 341 (m5U341) in tmRNA (transfer-mRNA). The protein is tRNA/tmRNA (uracil-C(5))-methyltransferase of Shewanella baltica (strain OS155 / ATCC BAA-1091).